A 349-amino-acid chain; its full sequence is MTNQHSAPLTYRDAGVDIDAGDALVDRIKPLAARTMRPGVLVGIGGFGALFEVPKKFREPVLVSGTDGVGTKLRLAFDWNRHDTVGIDLVAMSVNDILVQGAEPLYFLDYFACGKLSVDTAAAVVGGIARGCELAGCALIGGETAEMPGMYPDGEYDLAGFAVGAVDKSAIIDGKSIQPGDVVLGLASSGAHSNGYSLVRKILERAGARPDQDFHGQPLVDVVMAPTRIYVKQVLAALDRHGPAIKGLAHITGGGLLDNVPRILQPGMAAQLQRDGWEMPKLFQWLQQQGSVADAEMHRVFNCGIGMVLVVAADQADAVAATLREQGEIVNRIGEIVPQQDGMAQTVVV.

Belongs to the AIR synthase family.

The protein localises to the cytoplasm. It carries out the reaction 2-formamido-N(1)-(5-O-phospho-beta-D-ribosyl)acetamidine + ATP = 5-amino-1-(5-phospho-beta-D-ribosyl)imidazole + ADP + phosphate + H(+). It functions in the pathway purine metabolism; IMP biosynthesis via de novo pathway; 5-amino-1-(5-phospho-D-ribosyl)imidazole from N(2)-formyl-N(1)-(5-phospho-D-ribosyl)glycinamide: step 2/2. This is Phosphoribosylformylglycinamidine cyclo-ligase from Bordetella parapertussis (strain 12822 / ATCC BAA-587 / NCTC 13253).